Here is a 1153-residue protein sequence, read N- to C-terminus: Duffy receptor beta form (1153 aa).

The first 21 residues, Met-1–Ala-21, serve as a signal peptide directing secretion. The Extracellular segment spans residues Asn-22–Thr-1085. Asn-134, Asn-179, and Asn-202 each carry an N-linked (GlcNAc...) asparagine glycan. Cystine bridges form between Cys-214/Cys-243 and Cys-227/Cys-234. N-linked (GlcNAc...) asparagine glycans are attached at residues Asn-252 and Asn-348. 4 disulfide bridges follow: Cys-297–Cys-374, Cys-412–Cys-429, Cys-424–Cys-504, and Cys-433–Cys-502. N-linked (GlcNAc...) asparagine glycosylation is found at Asn-430 and Asn-467. 4 disordered regions span residues Leu-520–Lys-545, Asp-565–Glu-591, Arg-612–Gly-631, and Glu-655–His-981. Composition is skewed to polar residues over residues Ser-531 to Gly-542 and Asn-574 to Gly-586. N-linked (GlcNAc...) asparagine glycans are attached at residues Asn-576 and Asn-626. The segment covering Leu-661–Ser-675 has biased composition (basic and acidic residues). The segment covering Asn-677–Gly-733 has biased composition (polar residues). The N-linked (GlcNAc...) asparagine glycan is linked to Asn-722. Positions Ile-791–Glu-800 are enriched in basic and acidic residues. Positions Thr-819–Gly-834 are enriched in polar residues. N-linked (GlcNAc...) asparagine glycans are attached at residues Asn-847 and Asn-856. Residues Gly-867–Met-878 show a composition bias toward basic and acidic residues. The segment covering Asn-884 to Thr-942 has biased composition (low complexity). 3 N-linked (GlcNAc...) asparagine glycosylation sites follow: Asn-900, Asn-910, and Asn-935. Residues Thr-945–Phe-969 are compositionally biased toward basic and acidic residues. Polar residues predominate over residues Arg-971–His-981. The helical transmembrane segment at Gly-1086–Val-1106 threads the bilayer. The Cytoplasmic segment spans residues Ser-1107–Ser-1153.

It localises to the membrane. Functionally, binds to Neu5Gc-sialylated receptors on macaque erythrocytes. The sequence is that of Duffy receptor beta form from Plasmodium knowlesi.